We begin with the raw amino-acid sequence, 490 residues long: Polyamine transporter RMV1 (490 aa).

Over residues M1–E21 the composition is skewed to polar residues. Residues M1–D38 form a disordered region. 12 consecutive transmembrane segments (helical) span residues I53–I73, L83–I103, G116–V136, I160–L180, L188–V208, G231–W248, L273–L293, F303–A323, T363–F383, I386–V406, V425–F445, and L448–L468.

The protein belongs to the amino acid-polyamine-organocation (APC) superfamily. Polyamine:cation symporter (PHS) (TC 2.A.3.12) family.

The protein localises to the cell membrane. Its function is as follows. Cell membrane polyamine/proton symporter involved in the polyamine uptake in cells. Possesses high affinity for spermine and spermidine and lower affinity for putrescine. Transports paraquat, a polyamine analog, and thus confers sensitivity to this chemical which is used as a herbicide. This is Polyamine transporter RMV1 (RMV1) from Arabidopsis thaliana (Mouse-ear cress).